The following is a 155-amino-acid chain: Cathelicidin-1 (155 aa).

An N-terminal signal peptide occupies residues 1 to 29 (METQRASLSLGRCSLWLLLLGLALPSASA). Gln-30 bears the Pyrrolidone carboxylic acid mark. Positions 30-143 (QVLSYREAVL…KQPWAPPQAA (114 aa)) are excised as a propeptide. 3 disulfides stabilise this stretch: Cys-85/Cys-96, Cys-107/Cys-124, and Cys-146/Cys-154.

This sequence belongs to the cathelicidin family.

It localises to the secreted. Its function is as follows. Potent microbicidal activity; active against S.aureus and E.coli. The chain is Cathelicidin-1 (CATHL1A) from Ovis aries (Sheep).